The following is a 54-amino-acid chain: Kazal-type inhibitor-like protein (54 aa).

One can recognise a Kazal-like domain in the interval 1-54 (MKVNCKGYPTKFCFGKPLPHCASDGKTYPNRCRFCNAFVKSHGLITLRYYGKCK). 3 disulfides stabilise this stretch: Cys-5-Cys-35, Cys-13-Cys-32, and Cys-21-Cys-53.

May form disulfide-linked dimers or trimers (in vitro). As to expression, expressed by the venom gland.

The protein resides in the secreted. Functionally, partially inhibits trypsin in vitro at slightly acidic pH and concentrations in excess of 0.3 mM. Has no protease inhibitory activity at neutral or basic pH. Has no antibacterial activity. Shows no toxicity in vertebrates apart from transient paw edema in mouse. The polypeptide is Kazal-type inhibitor-like protein (Bothriechis schlegelii (Eyelash palm pitviper)).